The primary structure comprises 544 residues: MNTLRSMSISRRLWLILVVAVAMLVVLGLLMLRQIHGDLYQAKAEKTRHVVQTAAGVLAYYQGLEAAGTLSREAAQQQALQVVRALRYDHDDYFWINDLGPKMIMHPANPKLDDQDLSAIRDPDGFAVFNEMVALARQQDAGPVNYRWPKPGASEPVAKTSYIQLFKPWGWIIGSGVYVDDVQAEFARQLRDASLVGVGIALLMALVVMLIARSIARPLQEAVQAMGNIASGESDLTRRLDTHGSDEITHLGEHFNRFNGKLQGVVGQLQGAAHALAQSAGHVGDNAGAAQQRSAQQSLQMDQVATAVNEVTYAVQDVAKTAEQAAGEMRTAQQQVTHGQQAIHGSLAQIDRLSLTIDEAVQVIRDLAGHSTRIGGVLDVIRSIAEQTNLLALNAAIEAARAGEQGRGFAVVADEVRLLAQRTAQSTAEIHTMIEHLQSQSDAAVKAIDTSSEASRQTVEQAREAGASLDAINQVLNNLTALNASIASATLQQSHVVEEINRNVLDTAGLSQQTADAARQSSDAGVALGRLSEELEQLLRQFRV.

A run of 3 helical transmembrane segments spans residues 12-32 (RLWL…LLML), 50-70 (VVQT…AGTL), and 192-212 (DASL…MLIA). One can recognise an HAMP domain in the interval 213–267 (RSIARPLQEAVQAMGNIASGESDLTRRLDTHGSDEITHLGEHFNRFNGKLQGVVG). The Methyl-accepting transducer domain occupies 272–508 (AAHALAQSAG…EINRNVLDTA (237 aa)).

This sequence belongs to the methyl-accepting chemotaxis (MCP) protein family.

The protein resides in the cell membrane. Functionally, chemotactic-signal transducers respond to changes in the concentration of attractants and repellents in the environment, transduce a signal from the outside to the inside of the cell, and facilitate sensory adaptation through the variation of the level of methylation. McpP is a chemoreceptor that responds specifically to some C2 and C3 carboxylic acids. Recognizes acetate, pyruvate, propionate, and L-lactate. This is Methyl-accepting chemotaxis protein McpP from Pseudomonas putida (strain ATCC 47054 / DSM 6125 / CFBP 8728 / NCIMB 11950 / KT2440).